We begin with the raw amino-acid sequence, 313 residues long: Solute carrier family 35 member E3 (313 aa).

The next 10 membrane-spanning stretches (helical) occupy residues 14–34, 40–60, 77–97, 100–122, 130–146, 153–173, 187–207, 215–235, 252–272, and 275–295; these read IIAG…INKW, GFPN…GLFI, ILLL…SLQS, IGTY…TMYY, IKLT…LNSY, LMGM…QVWV, LLYY…PFFE, IFGP…VIAF, TYNM…YVLF, and PLSL…LAYT.

The protein belongs to the TPT transporter family. SLC35E subfamily.

The protein resides in the membrane. In terms of biological role, putative transporter. The chain is Solute carrier family 35 member E3 (slc35e3) from Danio rerio (Zebrafish).